Here is a 350-residue protein sequence, read N- to C-terminus: Heat-inducible transcription repressor HrcA (350 aa).

The protein belongs to the HrcA family.

In terms of biological role, negative regulator of class I heat shock genes (grpE-dnaK-dnaJ and groELS operons). Prevents heat-shock induction of these operons. The protein is Heat-inducible transcription repressor HrcA of Xanthomonas axonopodis pv. citri (strain 306).